The primary structure comprises 287 residues: Protease HtpX (287 aa).

Transmembrane regions (helical) follow at residues 4-24 (IFLL…VMSI) and 33-53 (GGLL…SLAI). Residue His139 participates in Zn(2+) binding. Glu140 is a catalytic residue. Zn(2+) is bound at residue His143. Transmembrane regions (helical) follow at residues 154–174 (LIQG…ASII) and 195–215 (AVVF…VAYF). Glu220 serves as a coordination point for Zn(2+).

It belongs to the peptidase M48B family. Zn(2+) is required as a cofactor.

It localises to the cell inner membrane. This is Protease HtpX from Shewanella loihica (strain ATCC BAA-1088 / PV-4).